Consider the following 254-residue polypeptide: Nickel import ATP-binding protein NikD (254 aa).

Positions 2–241 (PQQIELRNIA…PKHTVTRSLV (240 aa)) constitute an ABC transporter domain. Residue 36–43 (GGSGSGKS) participates in ATP binding.

Belongs to the ABC transporter superfamily. Nickel importer (TC 3.A.1.5.3) family. In terms of assembly, the complex is composed of two ATP-binding proteins (NikD and NikE), two transmembrane proteins (NikB and NikC) and a solute-binding protein (NikA).

The protein resides in the cell inner membrane. It carries out the reaction Ni(2+)(out) + ATP + H2O = Ni(2+)(in) + ADP + phosphate + H(+). Functionally, part of the ABC transporter complex NikABCDE involved in nickel import. Responsible for energy coupling to the transport system. The chain is Nickel import ATP-binding protein NikD from Shigella flexneri serotype 5b (strain 8401).